A 505-amino-acid polypeptide reads, in one-letter code: OVARIAN TUMOR DOMAIN-containing deubiquitinating enzyme 6 (505 aa).

The disordered stretch occupies residues 1-191 (MTRILVQRGS…NSSDEHMPCY (191 aa)). Low complexity predominate over residues 9 to 30 (GSSGSSSNSSRPSSSSSSSSGS). Over residues 51–72 (DEKQEEVTVVEKAECSDAKDVA) the composition is skewed to basic and acidic residues. The span at 73-86 (VDSDEPADREDDEG) shows a compositional bias: acidic residues. The segment covering 115-124 (PPVPAPPPKP) has biased composition (pro residues). Residues 159–173 (SSRSSPTGSHPSSPR) are compositionally biased toward low complexity. The span at 174-188 (SHSENEGYNSSDEHM) shows a compositional bias: basic and acidic residues. Residues 216-339 (FEIRRMLEDG…GNHYNSLVDP (124 aa)) form the OTU domain. Asp224 is a catalytic residue. The Nucleophile role is filled by Cys227. His332 is an active-site residue. The segment at 416–447 (RIGPKESSTSNAETSSSGARPSGSDSKPAEAV) is disordered. The segment covering 421–441 (ESSTSNAETSSSGARPSGSDS) has biased composition (low complexity). The UBA domain occupies 446-491 (AVKEKTVLSSSIEMVLSMGFSYAQAMEAYSIFGDDVDSMVCYVLET).

This sequence belongs to the peptidase C85 family. Interacts with KDM1C. Mostly expressed in stems flowers and siliques, and, to a lower extent, in leaves, roots and seedlings.

The protein localises to the nucleus. It localises to the cytoplasm. The enzyme catalyses Thiol-dependent hydrolysis of ester, thioester, amide, peptide and isopeptide bonds formed by the C-terminal Gly of ubiquitin (a 76-residue protein attached to proteins as an intracellular targeting signal).. Hydrolase that can remove conjugated ubiquitin from proteins in vitro and may therefore play an important regulatory role at the level of protein turnover by preventing degradation. Binds chromatin (e.g. nucleosomes and histones) and has enzymatic histone deubiquitinase activity, specific for the H2B histone. Can both repress (e.g. OSR2) and promote (e.g. AN3) the expression of target genes by associating with chromatin, deubiquitinating H2B and regulating its euchromatic histone marks (e.g. H3ac and H3K4me). In association with LDL1/KDM1C, involved in transcriptional gene repression via histone deubiquitination and demethylation. Promotes the concerted epigenetic regulation and repression (e.g. the removal of euchromatic histone acetylation, ubiquitination, and methylation marks) of a set of genes (e.g. GA20OX, WUS, OSR2, ARL and ABI5) that collectively limit plant growth thus stimulating plant growth and increasing cell size. This chain is OVARIAN TUMOR DOMAIN-containing deubiquitinating enzyme 6, found in Arabidopsis thaliana (Mouse-ear cress).